The primary structure comprises 571 residues: Proline--tRNA ligase (571 aa).

The protein belongs to the class-II aminoacyl-tRNA synthetase family. ProS type 1 subfamily. Homodimer.

The protein resides in the cytoplasm. The enzyme catalyses tRNA(Pro) + L-proline + ATP = L-prolyl-tRNA(Pro) + AMP + diphosphate. Its function is as follows. Catalyzes the attachment of proline to tRNA(Pro) in a two-step reaction: proline is first activated by ATP to form Pro-AMP and then transferred to the acceptor end of tRNA(Pro). As ProRS can inadvertently accommodate and process non-cognate amino acids such as alanine and cysteine, to avoid such errors it has two additional distinct editing activities against alanine. One activity is designated as 'pretransfer' editing and involves the tRNA(Pro)-independent hydrolysis of activated Ala-AMP. The other activity is designated 'posttransfer' editing and involves deacylation of mischarged Ala-tRNA(Pro). The misacylated Cys-tRNA(Pro) is not edited by ProRS. The chain is Proline--tRNA ligase from Haemophilus ducreyi (strain 35000HP / ATCC 700724).